Here is an 89-residue protein sequence, read N- to C-terminus: Small ribosomal subunit protein uS15c (89 aa).

This sequence belongs to the universal ribosomal protein uS15 family. As to quaternary structure, part of the 30S ribosomal subunit.

The protein resides in the plastid. Its subcellular location is the organellar chromatophore. The protein is Small ribosomal subunit protein uS15c (rps15) of Paulinella chromatophora.